The primary structure comprises 855 residues: DNA polymerase (855 aa).

Residues 107 to 332 (KPEMKPVFDA…LHNFFLPKIE (226 aa)) enclose the 3'-5' exonuclease domain. A polymerase region spans residues 333-833 (KNEKLCSLYY…MDKEHPDHSK (501 aa)).

This sequence belongs to the DNA polymerase type-A family. As to quaternary structure, single-chain monomer with multiple functions.

The catalysed reaction is DNA(n) + a 2'-deoxyribonucleoside 5'-triphosphate = DNA(n+1) + diphosphate. Replicates the viral genomic DNA. This polymerase possesses two enzymatic activities: DNA synthesis (polymerase) and an exonucleolytic activity that degrades single-stranded DNA in the 3'-5' direction for proofreading purpose. The DNA synthesis very likely occurs by strand displacement. The protein is DNA polymerase of Escherichia phage T5 (Enterobacteria phage T5).